We begin with the raw amino-acid sequence, 156 residues long: Snaclec A14 (156 aa).

The signal sequence occupies residues 1-23 (MGRFIFVRVGLLVVFLSLSGTGA). Intrachain disulfides connect Cys27/Cys38, Cys55/Cys152, and Cys127/Cys144. One can recognise a C-type lectin domain in the interval 34–153 (YDQHCYKAFD…CGDDYPFVCK (120 aa)). The N-linked (GlcNAc...) asparagine glycan is linked to Asn141.

It belongs to the snaclec family. In terms of assembly, heterodimer; disulfide-linked. In terms of tissue distribution, expressed by the venom gland.

The protein resides in the secreted. Functionally, interferes with one step of hemostasis (modulation of platelet aggregation, or coagulation cascade, for example). This is Snaclec A14 from Macrovipera lebetinus (Levantine viper).